We begin with the raw amino-acid sequence, 879 residues long: Alanine--tRNA ligase (879 aa).

Zn(2+)-binding residues include histidine 566, histidine 570, cysteine 668, and histidine 672.

This sequence belongs to the class-II aminoacyl-tRNA synthetase family. It depends on Zn(2+) as a cofactor.

Its subcellular location is the cytoplasm. It catalyses the reaction tRNA(Ala) + L-alanine + ATP = L-alanyl-tRNA(Ala) + AMP + diphosphate. Its function is as follows. Catalyzes the attachment of alanine to tRNA(Ala) in a two-step reaction: alanine is first activated by ATP to form Ala-AMP and then transferred to the acceptor end of tRNA(Ala). Also edits incorrectly charged Ser-tRNA(Ala) and Gly-tRNA(Ala) via its editing domain. The chain is Alanine--tRNA ligase from Oceanobacillus iheyensis (strain DSM 14371 / CIP 107618 / JCM 11309 / KCTC 3954 / HTE831).